The chain runs to 521 residues: Zinc finger CCCH domain-containing protein 45 (521 aa).

Disordered stretches follow at residues 28-60 (TEDSPANVASQPQRHSYPSRKPRGPDLPPGFEG), 142-185 (TPAI…PLCS), and 296-319 (SRSFTNPERRVSPPKPVNGSISPP). The segment covering 34 to 43 (NVASQPQRHS) has biased composition (polar residues). The span at 159–168 (EESSNSKVES) shows a compositional bias: low complexity. A compositionally biased stretch (polar residues) spans 170–185 (VTANKQGQLETKPLCS). The C3H1-type zinc-finger motif lies at 469–497 (NKIHQQCIYFGTANGCNMGDSCTYVHDRY).

The protein is Zinc finger CCCH domain-containing protein 45 of Arabidopsis thaliana (Mouse-ear cress).